Consider the following 100-residue polypeptide: MKGATLTRADLCEAVHEEVGLTRQDCAGLVERTLDLVAEALEKGETVKLSGFGVFQVRDKRARMGRNPKTGEPAEIEPRRVIGFRASQVMKARIDRALGG.

The protein belongs to the bacterial histone-like protein family. Heterodimer of an alpha and a beta chain.

In terms of biological role, this protein is one of the two subunits of integration host factor, a specific DNA-binding protein that functions in genetic recombination as well as in transcriptional and translational control. In Caulobacter sp. (strain K31), this protein is Integration host factor subunit alpha.